The primary structure comprises 192 residues: Ion-translocating oxidoreductase complex subunit B (192 aa).

Residues 1 to 26 form a hydrophobic region; sequence MNTIWIAVGALALLGLVFGAILGYAS. The 4Fe-4S domain occupies 32–91; sequence EDDPVVEKIDAILPQSQCGQCGYPGCRPYAEAVGLQGEKINRCAPGGEAVMLKIAELLNV. [4Fe-4S] cluster-binding residues include C49, C52, C57, C74, C117, C120, C123, C127, C147, C150, C153, and C157. 4Fe-4S ferredoxin-type domains follow at residues 108 to 137 and 138 to 167; these read MLAV…GATR and AMHT…LRPV.

This sequence belongs to the 4Fe4S bacterial-type ferredoxin family. RnfB subfamily. The complex is composed of six subunits: RsxA, RsxB, RsxC, RsxD, RsxE and RsxG. [4Fe-4S] cluster serves as cofactor.

The protein resides in the cell inner membrane. Its function is as follows. Part of a membrane-bound complex that couples electron transfer with translocation of ions across the membrane. Required to maintain the reduced state of SoxR. In Salmonella newport (strain SL254), this protein is Ion-translocating oxidoreductase complex subunit B.